A 444-amino-acid polypeptide reads, in one-letter code: Protein EMP46 (444 aa).

The first 46 residues, 1–46 (MTTRKTASSLQLLGKITGTKAGTKQKKMNFINGLIWLYMCVWMVHG), serve as a signal peptide directing secretion. At 47–408 (KVTQKDELKW…YGKQTKGHDE (362 aa)) the chain is on the lumenal side. The 218-residue stretch at 52-269 (DELKWNKGYS…EILKMKLYDG (218 aa)) folds into the L-type lectin-like domain. A K(+)-binding site is contributed by Y177. C196 and C230 are disulfide-bonded. The chain crosses the membrane as a helical span at residues 409 to 429 (IFSKISVWLALLIFIMITLAY). The mediates the interactions with COPI and COPII coat complexes stretch occupies residues 429-432 (YYMF). At 430–444 (YMFRINQDIKKVKLL) the chain is on the cytoplasmic side. The short motif at 440–444 (KVKLL) is the Di-lysine motif element.

This sequence belongs to the EMP46/EMP47 family. As to quaternary structure, interacts with EMP47 in the endoplasmic reticulum membrane in order to be transported to the Golgi apparatus. Interacts with the coatomer proteins COP1, SEC21 and SEC23.

The protein resides in the golgi apparatus membrane. It is found in the endoplasmic reticulum membrane. Its function is as follows. Involved in the secretion of glycoproteins and in nucleus architecture and gene silencing. In Saccharomyces cerevisiae (strain ATCC 204508 / S288c) (Baker's yeast), this protein is Protein EMP46 (EMP46).